A 388-amino-acid chain; its full sequence is uncharacterized protein (388 aa).

This is an uncharacterized protein from Klebsiella pneumoniae.